Reading from the N-terminus, the 358-residue chain is GMP reductase (358 aa).

NADP(+) contacts are provided by residues 26-27 (SR), Lys-78, 130-132 (DVA), and 181-182 (IG). Residues Gly-182, Gly-184, and Cys-187 each coordinate K(+). Cys-187 functions as the Thioimidate intermediate in the catalytic mechanism. Thr-189 acts as the Proton donor/acceptor in catalysis. Position 190 (Arg-190) interacts with K(+). GMP-binding positions include 220–222 (DGG), 243–244 (GG), 269–271 (GMS), and 287–291 (RASEG). Residues Met-270, 286–287 (YR), and 315–318 (SACT) each bind NADP(+).

The protein belongs to the IMPDH/GMPR family. GuaC type 1 subfamily. Homotetramer.

It catalyses the reaction IMP + NH4(+) + NADP(+) = GMP + NADPH + 2 H(+). Its function is as follows. Catalyzes the irreversible NADPH-dependent deamination of GMP to IMP. It functions in the conversion of nucleobase, nucleoside and nucleotide derivatives of G to A nucleotides, and in maintaining the intracellular balance of A and G nucleotides. This chain is GMP reductase, found in Caenorhabditis elegans.